Consider the following 230-residue polypeptide: MAIGKRLKKAREGIDRTKLYPLADAIKMIKERAVSKFDETIEVAINLGVDPRHADQMVRGVVMLPNGTGRTLRVGVFARGAKAEEAKAAGADVVGAEDLVEKVQNGNIDFDRCIATPDMMPLVGRLGKVLGPRGMMPNPKIGTVTMDVAGAVKGAKGGSVEFRVEKAGIIQAGVGKASFAEDKLVENIKALADAVVKAKPAGAKGTYVQRVAVSSTMGPGVKVEPGTVLA.

It belongs to the universal ribosomal protein uL1 family. As to quaternary structure, part of the 50S ribosomal subunit.

Binds directly to 23S rRNA. The L1 stalk is quite mobile in the ribosome, and is involved in E site tRNA release. Its function is as follows. Protein L1 is also a translational repressor protein, it controls the translation of the L11 operon by binding to its mRNA. This chain is Large ribosomal subunit protein uL1, found in Bradyrhizobium sp. (strain BTAi1 / ATCC BAA-1182).